A 286-amino-acid polypeptide reads, in one-letter code: Ribosomal RNA small subunit methyltransferase A (286 aa).

Asparagine 33, valine 35, glycine 60, glutamate 81, aspartate 111, and asparagine 129 together coordinate S-adenosyl-L-methionine.

This sequence belongs to the class I-like SAM-binding methyltransferase superfamily. rRNA adenine N(6)-methyltransferase family. RsmA subfamily.

Its subcellular location is the cytoplasm. The catalysed reaction is adenosine(1518)/adenosine(1519) in 16S rRNA + 4 S-adenosyl-L-methionine = N(6)-dimethyladenosine(1518)/N(6)-dimethyladenosine(1519) in 16S rRNA + 4 S-adenosyl-L-homocysteine + 4 H(+). Functionally, specifically dimethylates two adjacent adenosines (A1518 and A1519) in the loop of a conserved hairpin near the 3'-end of 16S rRNA in the 30S particle. May play a critical role in biogenesis of 30S subunits. In Streptomyces coelicolor (strain ATCC BAA-471 / A3(2) / M145), this protein is Ribosomal RNA small subunit methyltransferase A.